The sequence spans 119 residues: Ribonuclease P protein component (119 aa).

It belongs to the RnpA family. As to quaternary structure, consists of a catalytic RNA component (M1 or rnpB) and a protein subunit.

The catalysed reaction is Endonucleolytic cleavage of RNA, removing 5'-extranucleotides from tRNA precursor.. Its function is as follows. RNaseP catalyzes the removal of the 5'-leader sequence from pre-tRNA to produce the mature 5'-terminus. It can also cleave other RNA substrates such as 4.5S RNA. The protein component plays an auxiliary but essential role in vivo by binding to the 5'-leader sequence and broadening the substrate specificity of the ribozyme. In Borreliella burgdorferi (strain ZS7) (Borrelia burgdorferi), this protein is Ribonuclease P protein component.